Here is a 273-residue protein sequence, read N- to C-terminus: Formamidopyrimidine-DNA glycosylase (273 aa).

P2 serves as the catalytic Schiff-base intermediate with DNA. E3 functions as the Proton donor in the catalytic mechanism. The Proton donor; for beta-elimination activity role is filled by K59. Residues H92 and R111 each coordinate DNA. The FPG-type zinc-finger motif lies at 239–273 (KVYGKTGEPCVICGTPIEKIKLNGRGTHFCPHCQK). The active-site Proton donor; for delta-elimination activity is the R263.

This sequence belongs to the FPG family. In terms of assembly, monomer. Zn(2+) serves as cofactor.

It carries out the reaction Hydrolysis of DNA containing ring-opened 7-methylguanine residues, releasing 2,6-diamino-4-hydroxy-5-(N-methyl)formamidopyrimidine.. It catalyses the reaction 2'-deoxyribonucleotide-(2'-deoxyribose 5'-phosphate)-2'-deoxyribonucleotide-DNA = a 3'-end 2'-deoxyribonucleotide-(2,3-dehydro-2,3-deoxyribose 5'-phosphate)-DNA + a 5'-end 5'-phospho-2'-deoxyribonucleoside-DNA + H(+). In terms of biological role, involved in base excision repair of DNA damaged by oxidation or by mutagenic agents. Acts as a DNA glycosylase that recognizes and removes damaged bases. Has a preference for oxidized purines, such as 7,8-dihydro-8-oxoguanine (8-oxoG). Has AP (apurinic/apyrimidinic) lyase activity and introduces nicks in the DNA strand. Cleaves the DNA backbone by beta-delta elimination to generate a single-strand break at the site of the removed base with both 3'- and 5'-phosphates. In Listeria innocua serovar 6a (strain ATCC BAA-680 / CLIP 11262), this protein is Formamidopyrimidine-DNA glycosylase.